The primary structure comprises 151 residues: Macrodomain Ter protein (151 aa).

It belongs to the MatP family. Homodimer.

Its subcellular location is the cytoplasm. Functionally, required for spatial organization of the terminus region of the chromosome (Ter macrodomain) during the cell cycle. Prevents early segregation of duplicated Ter macrodomains during cell division. Binds specifically to matS, which is a 13 bp signature motif repeated within the Ter macrodomain. The sequence is that of Macrodomain Ter protein from Yersinia pseudotuberculosis serotype IB (strain PB1/+).